Reading from the N-terminus, the 355-residue chain is DNA polymerase IV (355 aa).

Residues 6 to 187 form the UmuC domain; that stretch reads IIHVDMDAFY…LPVGKIHGVG (182 aa). Positions 10 and 105 each coordinate Mg(2+). Residue Glu106 is part of the active site.

This sequence belongs to the DNA polymerase type-Y family. As to quaternary structure, monomer. Requires Mg(2+) as cofactor.

The protein resides in the cytoplasm. The enzyme catalyses DNA(n) + a 2'-deoxyribonucleoside 5'-triphosphate = DNA(n+1) + diphosphate. In terms of biological role, poorly processive, error-prone DNA polymerase involved in untargeted mutagenesis. Copies undamaged DNA at stalled replication forks, which arise in vivo from mismatched or misaligned primer ends. These misaligned primers can be extended by PolIV. Exhibits no 3'-5' exonuclease (proofreading) activity. May be involved in translesional synthesis, in conjunction with the beta clamp from PolIII. The polypeptide is DNA polymerase IV (Alkalilimnicola ehrlichii (strain ATCC BAA-1101 / DSM 17681 / MLHE-1)).